Reading from the N-terminus, the 254-residue chain is 5-oxoprolinase subunit A (254 aa).

It belongs to the LamB/PxpA family. Forms a complex composed of PxpA, PxpB and PxpC.

It catalyses the reaction 5-oxo-L-proline + ATP + 2 H2O = L-glutamate + ADP + phosphate + H(+). Functionally, catalyzes the cleavage of 5-oxoproline to form L-glutamate coupled to the hydrolysis of ATP to ADP and inorganic phosphate. This is 5-oxoprolinase subunit A from Burkholderia lata (strain ATCC 17760 / DSM 23089 / LMG 22485 / NCIMB 9086 / R18194 / 383).